Here is a 350-residue protein sequence, read N- to C-terminus: Glycerol-1-phosphate dehydrogenase [NAD(P)+] (350 aa).

NAD(+)-binding positions include 97-101 (GSIID) and 119-122 (TTAS). Position 124 (D124) interacts with substrate. S128 is an NAD(+) binding site. D171 contacts substrate. D171 and H251 together coordinate Zn(2+). H255 is a substrate binding site. H267 contributes to the Zn(2+) binding site.

This sequence belongs to the glycerol-1-phosphate dehydrogenase family. Zn(2+) is required as a cofactor.

Its subcellular location is the cytoplasm. The enzyme catalyses sn-glycerol 1-phosphate + NAD(+) = dihydroxyacetone phosphate + NADH + H(+). It catalyses the reaction sn-glycerol 1-phosphate + NADP(+) = dihydroxyacetone phosphate + NADPH + H(+). Its pathway is membrane lipid metabolism; glycerophospholipid metabolism. Catalyzes the NAD(P)H-dependent reduction of dihydroxyacetonephosphate (DHAP or glycerone phosphate) to glycerol 1-phosphate (G1P). The G1P thus generated is used as the glycerophosphate backbone of phospholipids in the cellular membranes of Archaea. In Thermococcus sibiricus (strain DSM 12597 / MM 739), this protein is Glycerol-1-phosphate dehydrogenase [NAD(P)+].